Consider the following 314-residue polypeptide: Methionyl-tRNA formyltransferase (314 aa).

Residue 110–113 coordinates (6S)-5,6,7,8-tetrahydrofolate; the sequence is SLLP.

It belongs to the Fmt family.

The enzyme catalyses L-methionyl-tRNA(fMet) + (6R)-10-formyltetrahydrofolate = N-formyl-L-methionyl-tRNA(fMet) + (6S)-5,6,7,8-tetrahydrofolate + H(+). Functionally, attaches a formyl group to the free amino group of methionyl-tRNA(fMet). The formyl group appears to play a dual role in the initiator identity of N-formylmethionyl-tRNA by promoting its recognition by IF2 and preventing the misappropriation of this tRNA by the elongation apparatus. The chain is Methionyl-tRNA formyltransferase from Bacillus cereus (strain ATCC 14579 / DSM 31 / CCUG 7414 / JCM 2152 / NBRC 15305 / NCIMB 9373 / NCTC 2599 / NRRL B-3711).